We begin with the raw amino-acid sequence, 621 residues long: MTLDISKYPTLALANTPEELRLLPKETLPTLCDELRTYLLNSVSQSSGHLASGLGTVELTVALHYVYNTPVDKLIWDVGHQAYPHKILTGRRDQMPTIRQKDGLHPFPWREESEYDTLSVGHSSTSISAGLGLAISAQKEGKGRKVISVIGDGAITAGMAFEAMNHAGDVHPDMLVILNDNEMSISENVGALNNHLAKVLSGSLYTSIREGGKKVLSGVPPIKELVRRTEEHLKGMVVPGTLFEEFGFNYIGPIDGHDVNELVKTLKNMRELKGPQFLHIMTKKGKGYEPAEKDPIGYHGVPKFDPSHNCLPKSSGGKPTFSKIFGDFLCDMAAQDPKLMAITPAMREGSGMVRFSKEFPDQYFDVAIAEQHAVTLATGMAIAGDHPIVAIYSTFLQRGYDQLIHDIAIMDLPVMFAIDRAGLVGADGQTHQGAFDLSFMRCIPNMVIMAPSDENECRQMLYTGHKHTGPSAVRYPRGSGMGTEIEKEFTALEIGKGRVVRKGEKVAILSFGTFLPNALEAAKNLNATVADMRFVKPLDEALIRQLADEHDVLVTLEENAIAGGAGAGVIEFMMKEKIIKPVLNLGLPDKFIHQGTQEELHEELGLDAKGIEKSIAEYLAK.

Thiamine diphosphate-binding positions include histidine 80 and 121–123 (GHS). Aspartate 152 contributes to the Mg(2+) binding site. Residues 153–154 (GA), asparagine 181, tyrosine 288, and glutamate 370 each bind thiamine diphosphate. Residue asparagine 181 coordinates Mg(2+).

Belongs to the transketolase family. DXPS subfamily. In terms of assembly, homodimer. Mg(2+) serves as cofactor. Requires thiamine diphosphate as cofactor.

It carries out the reaction D-glyceraldehyde 3-phosphate + pyruvate + H(+) = 1-deoxy-D-xylulose 5-phosphate + CO2. It functions in the pathway metabolic intermediate biosynthesis; 1-deoxy-D-xylulose 5-phosphate biosynthesis; 1-deoxy-D-xylulose 5-phosphate from D-glyceraldehyde 3-phosphate and pyruvate: step 1/1. Functionally, catalyzes the acyloin condensation reaction between C atoms 2 and 3 of pyruvate and glyceraldehyde 3-phosphate to yield 1-deoxy-D-xylulose-5-phosphate (DXP). In Vibrio parahaemolyticus serotype O3:K6 (strain RIMD 2210633), this protein is 1-deoxy-D-xylulose-5-phosphate synthase.